The primary structure comprises 148 residues: MAAAALTLRTRAAVTALLSPTAPTALAVRHASKKTGGSSKNLGGKSRGKHYGIKKMEGHYVHAGNILGTQRQFRWHPGAHVGLGRNKCLYALEEGIVRYTKDVYVPNPKNTEAVDLVTSLPKGAVLYKTFVHVVPAKPEGTFKLVDML.

A mitochondrion-targeting transit peptide spans 1 to 30; the sequence is MAAAALTLRTRAAVTALLSPTAPTALAVRH. Residues 28-48 form a disordered region; that stretch reads VRHASKKTGGSSKNLGGKSRG.

It belongs to the bacterial ribosomal protein bL27 family. Component of the mitochondrial ribosome large subunit (39S) which comprises a 16S rRNA and about 50 distinct proteins.

It is found in the mitochondrion. This Mus musculus (Mouse) protein is Large ribosomal subunit protein bL27m (Mrpl27).